A 142-amino-acid polypeptide reads, in one-letter code: HTH-type transcriptional regulator MntR (142 aa).

One can recognise an HTH dtxR-type domain in the interval 1 to 63 (MPTPSMEDYI…YEKYRGLILT (63 aa)). 6 residues coordinate Mn(2+): D8, E11, H77, E99, E102, and H103.

Belongs to the DtxR/MntR family. Homodimer.

Its subcellular location is the cytoplasm. Its activity is regulated as follows. DNA binding is strongly activated by Mn(2+). Functionally, central regulator of manganese homeostasis. The protein is HTH-type transcriptional regulator MntR of Listeria welshimeri serovar 6b (strain ATCC 35897 / DSM 20650 / CCUG 15529 / CIP 8149 / NCTC 11857 / SLCC 5334 / V8).